Here is a 461-residue protein sequence, read N- to C-terminus: Phosphoglucosamine mutase (461 aa).

The Phosphoserine intermediate role is filled by S113. 4 residues coordinate Mg(2+): S113, D251, D253, and D255. Residue S113 is modified to Phosphoserine.

Belongs to the phosphohexose mutase family. It depends on Mg(2+) as a cofactor. In terms of processing, activated by phosphorylation.

It carries out the reaction alpha-D-glucosamine 1-phosphate = D-glucosamine 6-phosphate. In terms of biological role, catalyzes the conversion of glucosamine-6-phosphate to glucosamine-1-phosphate. The polypeptide is Phosphoglucosamine mutase (Prochlorococcus marinus (strain SARG / CCMP1375 / SS120)).